Consider the following 678-residue polypeptide: Nucleolar protein 9 (678 aa).

Residues 1–15 show a composition bias toward basic residues; the sequence is MPRDKQKRGRRAEAK. The disordered stretch occupies residues 1–24; it reads MPRDKQKRGRRAEAKRKRDDVITD. Pumilio repeat units follow at residues 108-143, 291-334, and 382-419; these read EANGKELKIACSQSCSRLMEKLISASTVSQIKRLFS, GLDN…SLLR, and KILVRERIGSFSRNEIAGHVVVRILERLSKDDLKSAMD. Positions 477–496 are disordered; the sequence is QRSNQESDGTTSSSNTSSPE. Pumilio repeat units follow at residues 524 to 562 and 563 to 600; these read AVTTETLISIAQDPVVSHVLQDALTLPTSTPQFRRQITS and RFSGKIAELALHSSGSHVVDALWPATKDLLFVKQRFAE.

It is found in the nucleus. Its subcellular location is the nucleolus. Functionally, RNA-binding nucleolar protein required for pre-rRNA processing. Involved in production of 18S rRNA and assembly of small ribosomal subunit. This chain is Nucleolar protein 9 (NOP9), found in Paracoccidioides brasiliensis (strain Pb18).